The chain runs to 985 residues: Coiled-coil domain-containing protein 33 (985 aa).

Residues 228–263 (MSPFSTDSDQEGLSWEAGPWQHPAQVPEEPQGRLDT) form a disordered region. One can recognise a C2 domain in the interval 263–398 (TSQDPYPAAN…VFLRGVNEPL (136 aa)). Residues 599–745 (VEMNNYRRAM…LEERLCERKE (147 aa)) are a coiled coil. Residues 821 to 842 (AERLQDTNGPGHPKSTETLPAQ) form a disordered region. A coiled-coil region spans residues 885 to 928 (DKFNLLAKLEQAQSRILSLENQLEESARHWAREKQNLAIRLQEQ). The disordered stretch occupies residues 931-985 (GFGQPPNSIIIDQPNAGASKNPQQLSKLEPSLPSSDKKLNRPSDSQIEISNNQKT). Composition is skewed to polar residues over residues 946–956 (AGASKNPQQLS) and 972–985 (PSDS…NQKT).

In Mus musculus (Mouse), this protein is Coiled-coil domain-containing protein 33 (Ccdc33).